We begin with the raw amino-acid sequence, 91 residues long: MMERYLIKVLGRVQGVGFRYFAQSLAGTYSITGTVKNCEDATVRIEAQGEEKNLNKFLAEIRKGNRFVKVEDIVAKKIPTADNEKSFKIVY.

Residues 4–91 (RYLIKVLGRV…DNEKSFKIVY (88 aa)) enclose the Acylphosphatase-like domain. Residues Arg-19 and Asn-37 contribute to the active site.

This sequence belongs to the acylphosphatase family.

It catalyses the reaction an acyl phosphate + H2O = a carboxylate + phosphate + H(+). This chain is Acylphosphatase (acyP), found in Clostridium acetobutylicum (strain ATCC 824 / DSM 792 / JCM 1419 / IAM 19013 / LMG 5710 / NBRC 13948 / NRRL B-527 / VKM B-1787 / 2291 / W).